Here is a 142-residue protein sequence, read N- to C-terminus: Hemoglobin subunit alpha (142 aa).

The region spanning 2 to 142 (HLTADDKKHI…VSNVLTSKYR (141 aa)) is the Globin domain. Heme b contacts are provided by His-59 and His-88.

The protein belongs to the globin family. As to quaternary structure, heterotetramer of two alpha chains and two beta chains. As to expression, red blood cells.

In terms of biological role, involved in oxygen transport from the lung to the various peripheral tissues. This Xenopus tropicalis (Western clawed frog) protein is Hemoglobin subunit alpha (hba-A).